The primary structure comprises 95 residues: HIG1 domain family member 1A, mitochondrial (95 aa).

Residue Ser2 is modified to N-acetylserine. The region spanning 2–93 is the HIG1 domain; the sequence is STNTDLSLSS…YQEFWANPKP (92 aa). A Phosphoserine modification is found at Ser8. 2 consecutive transmembrane segments (helical) span residues 28–48 and 69–89; these read PFVPIGMAGFAAIVAYGLYKL and GFVVGAMTLGMGYSMYQEFWA.

As to quaternary structure, associates with cytochrome c oxidase (COX, complex IV); proposed complex component. Also associates with respiratory chain supercomplexes.

The protein localises to the mitochondrion membrane. It localises to the mitochondrion inner membrane. Proposed subunit of cytochrome c oxidase (COX, complex IV), which is the terminal component of the mitochondrial respiratory chain that catalyzes the reduction of oxygen to water. May play a role in the assembly of respiratory supercomplexes. The chain is HIG1 domain family member 1A, mitochondrial (Higd1a) from Mus musculus (Mouse).